A 464-amino-acid polypeptide reads, in one-letter code: Alpha-1,6-mannosyl-glycoprotein 4-beta-N-acetylglucosaminyltransferase (464 aa).

Residues 1-10 (MRCSPKRSLT) are Cytoplasmic-facing. The helical; Signal-anchor for type II membrane protein transmembrane segment at 11 to 31 (AVIAASFLLLLLLLLLHRGSW) threads the bilayer. Over 32–464 (QDPQEVQFRD…QSIGIWTAGT (433 aa)) the chain is Lumenal. N-linked (GlcNAc...) asparagine glycans are attached at residues asparagine 70 and asparagine 201.

This sequence belongs to the glycosyltransferase 54 family. It depends on a divalent metal cation as a cofactor. As to expression, highly expressed in oviduct, spleen, lung and colon.

It localises to the golgi apparatus membrane. It catalyses the reaction N(4)-{beta-D-GlcNAc-(1-&gt;2)-[beta-D-GlcNAc-(1-&gt;4)]-alpha-D-Man-(1-&gt;3)-[beta-D-GlcNAc-(1-&gt;2)-[beta-D-GlcNAc-(1-&gt;6)]-alpha-D-Man-(1-&gt;6)]-beta-D-Man-(1-&gt;4)-beta-D-GlcNAc-(1-&gt;4)-beta-D-GlcNAc}-L-asparaginyl-[protein] + UDP-N-acetyl-alpha-D-glucosamine = N(4)-{beta-D-GlcNAc-(1-&gt;2)-[beta-D-GlcNAc-(1-&gt;4)]-alpha-D-Man-(1-&gt;3)-[beta-D-GlcNAc-(1-&gt;2)-[beta-D-GlcNAc-(1-&gt;4)]-[beta-D-GlcNAc-(1-&gt;6)]-alpha-D-Man-(1-&gt;6)]-beta-D-Man-(1-&gt;4)-beta-D-GlcNAc-(1-&gt;4)-beta-D-GlcNAc}-L-asparaginyl-[protein] + UDP + H(+). It participates in protein modification; protein glycosylation. In terms of biological role, glycosyltransferase that catalyzes the transfer of GlcNAc to the Manalpha1-6 arm to form GlcNAcBeta1-4Manalpha1-6 linkage (also named 'GnT-VI' activity). May also participate in the transfer of N-acetylglucosamine (GlcNAc) to the core mannose residues of N-linked glycans by catalyzing the formation of the GlcNAcbeta1-4 branch on the GlcNAcbeta1-2Manalpha1-3 arm of the core structure of N-linked glycans. This is Alpha-1,6-mannosyl-glycoprotein 4-beta-N-acetylglucosaminyltransferase (MGAT4C) from Gallus gallus (Chicken).